We begin with the raw amino-acid sequence, 376 residues long: Zinc finger CCCH domain-containing protein C337.12 (376 aa).

Residues 2–25 adopt a coiled-coil conformation; it reads NEQQLLENIASLAGAINQYKNEKE. Positions 60-95 are disordered; that stretch reads SKSTAASPPYVIPSTSSNADDANKEPEKQSTSDYVS. Positions 80–89 are enriched in basic and acidic residues; that stretch reads DANKEPEKQS. The stretch at 105-140 forms a coiled coil; it reads KKNILEHDLQARKANLESYRAKLEKEYKTLAENKIQ. C3H1-type zinc fingers lie at residues 202–228, 229–256, 257–283, and 284–312; these read SPSA…FVHE, PTRK…HELD, PRRI…HIHY, and SENA…HILQ. The segment at 347-376 is disordered; sequence SKTAGSINPEDSGSEIGSNSLESNLDFISV. Residues 349–369 show a composition bias toward polar residues; that stretch reads TAGSINPEDSGSEIGSNSLES.

It is found in the nucleus. This is Zinc finger CCCH domain-containing protein C337.12 from Schizosaccharomyces pombe (strain 972 / ATCC 24843) (Fission yeast).